Reading from the N-terminus, the 134-residue chain is Holo-[acyl-carrier-protein] synthase (134 aa).

The Mg(2+) site is built by Asp8 and Glu57.

It belongs to the P-Pant transferase superfamily. AcpS family. It depends on Mg(2+) as a cofactor.

It is found in the cytoplasm. It catalyses the reaction apo-[ACP] + CoA = holo-[ACP] + adenosine 3',5'-bisphosphate + H(+). Functionally, transfers the 4'-phosphopantetheine moiety from coenzyme A to a Ser of acyl-carrier-protein. The sequence is that of Holo-[acyl-carrier-protein] synthase from Rhizobium etli (strain ATCC 51251 / DSM 11541 / JCM 21823 / NBRC 15573 / CFN 42).